The following is a 478-amino-acid chain: Geranial dehydrogenase (478 aa).

230 to 235 (GSTSAG) serves as a coordination point for NAD(+). E252 functions as the Proton acceptor in the catalytic mechanism. C286 serves as the catalytic Nucleophile.

This sequence belongs to the aldehyde dehydrogenase family.

The enzyme catalyses (2E)-geranial + NAD(+) + H2O = geranate + NADH + 2 H(+). The catalysed reaction is perillyl aldehyde + NAD(+) + H2O = perillate + NADH + 2 H(+). Its pathway is terpene metabolism; monoterpene degradation. In terms of biological role, involved in the degradation of the monoterpenes beta-myrcene and limonene. During anaerobic degradation of beta-myrcene, catalyzes the NAD(+)-dependent oxidation of geranial to geranic acid. Seems to be specific for the trans-isomer geranial, since it does not act on the cis-isomer neral. During degradation of limonene, catalyzes the NAD(+)-dependent conversion of perillyl aldehyde to perrilic acid. This is Geranial dehydrogenase from Castellaniella defragrans (strain DSM 12143 / CCUG 39792 / 65Phen) (Alcaligenes defragrans).